The sequence spans 118 residues: Large ribosomal subunit protein eL18 (118 aa).

This sequence belongs to the eukaryotic ribosomal protein eL18 family.

The sequence is that of Large ribosomal subunit protein eL18 from Sulfurisphaera tokodaii (strain DSM 16993 / JCM 10545 / NBRC 100140 / 7) (Sulfolobus tokodaii).